Here is a 420-residue protein sequence, read N- to C-terminus: Tyrosine--tRNA ligase (420 aa).

Residue Tyr-36 coordinates L-tyrosine. The short motif at 41–50 is the 'HIGH' region element; it reads PTADSLHIGH. L-tyrosine is bound by residues Tyr-170 and Gln-174. The 'KMSKS' region signature appears at 231 to 235; the sequence is KFGKS. Lys-234 is a binding site for ATP. An S4 RNA-binding domain is found at 353–420; the sequence is SNIIDVLIET…KKKYFMVNYK (68 aa).

It belongs to the class-I aminoacyl-tRNA synthetase family. TyrS type 1 subfamily. Homodimer.

The protein localises to the cytoplasm. It catalyses the reaction tRNA(Tyr) + L-tyrosine + ATP = L-tyrosyl-tRNA(Tyr) + AMP + diphosphate + H(+). Functionally, catalyzes the attachment of tyrosine to tRNA(Tyr) in a two-step reaction: tyrosine is first activated by ATP to form Tyr-AMP and then transferred to the acceptor end of tRNA(Tyr). This Staphylococcus haemolyticus (strain JCSC1435) protein is Tyrosine--tRNA ligase.